We begin with the raw amino-acid sequence, 400 residues long: Delta(12) fatty acid desaturase (400 aa).

The helical transmembrane segment at 91–111 threads the bilayer; it reads LAWPAYWIMQGIVCTGIWVLA. The short motif at 112-116 is the Histidine box-1 element; the sequence is HECGH. The short motif at 148-152 is the Histidine box-2 element; sequence HSKHH. 3 helical membrane-spanning segments follow: residues 199 to 219, 245 to 265, and 277 to 297; these read IVTLFWMVIQFLFGWPAYLIM, FFDIIISDLGVLAALGALIYA, and YYIVPYLFVNFWLVLITFLQH. Residues 339 to 343 carry the Histidine box-3 motif; the sequence is HVAHH.

The protein belongs to the fatty acid desaturase type 1 family.

Its subcellular location is the membrane. The catalysed reaction is (9Z)-octadecenoyl-CoA + 2 Fe(II)-[cytochrome b5] + O2 + 2 H(+) = (9Z,12Z)-octadecadienoyl-CoA + 2 Fe(III)-[cytochrome b5] + 2 H2O. The enzyme catalyses (9Z)-hexadecenoyl-CoA + 2 Fe(II)-[cytochrome b5] + O2 + 2 H(+) = (9Z,12Z)-hexadecadienoyl-CoA + 2 Fe(III)-[cytochrome b5] + 2 H2O. It participates in lipid metabolism; polyunsaturated fatty acid biosynthesis. Functionally, catalyzes the desaturation of oleic acid (Delta(9)-18:1) to linoleic acid (Delta(9), Delta(12)-18:2). The sequence is that of Delta(12) fatty acid desaturase from Mortierella alpina (Oleaginous fungus).